A 277-amino-acid polypeptide reads, in one-letter code: Energy-coupling factor transporter ATP-binding protein EcfA1 (277 aa).

Residues 5-242 (VKVNNISFEY…IKMLKEIGLD (238 aa)) form the ABC transporter domain. Residue 41–48 (GHNGSGKS) coordinates ATP.

Belongs to the ABC transporter superfamily. Energy-coupling factor EcfA family. Forms a stable energy-coupling factor (ECF) transporter complex composed of 2 membrane-embedded substrate-binding proteins (S component), 2 ATP-binding proteins (A component) and 2 transmembrane proteins (T component).

It is found in the cell membrane. ATP-binding (A) component of a common energy-coupling factor (ECF) ABC-transporter complex. Unlike classic ABC transporters this ECF transporter provides the energy necessary to transport a number of different substrates. This chain is Energy-coupling factor transporter ATP-binding protein EcfA1, found in Clostridioides difficile (strain 630) (Peptoclostridium difficile).